Reading from the N-terminus, the 425-residue chain is MSNNSRLPENGVQSGNGEDAELKKSMRIIEREIPDSLLEKIPEAEDYIALQDLERKLDSLIVRKRFDLQDSLSRNSHKTRILRMYIHSTVANQSWQQKGENQENNSGDINSLPIPEWTLHIEGRLLVNPDDEDDKAFELAPFTNFFRKIAIQILRSDDLYPSGNYVEWNKLPDNSNTSNGITVTRKGDQSVDVKIMLYPEEHPERYKLSKAFANILGIREGTRPDIVSYLWQYIKFHRLQDMEEKRLINCDKALRDLFEADRLYFPRIPELMNRFLEPIDPIVIPYTINVSEHTVEKVTIFDIRINTEDPRHSQIRSFLATMMSQDKIRSIDDKLTELIQAITYSQSKYDFMKKFSESPIEFINEWIESQSRDLEIVLDGTNMNYAEKRSADYYQQPWVHESAFHYLNLLNSKKQQSVLNASAKK.

The span at 1–16 (MSNNSRLPENGVQSGN) shows a compositional bias: polar residues. The tract at residues 1-23 (MSNNSRLPENGVQSGNGEDAELK) is disordered. The 78-residue stretch at 201–278 (EHPERYKLSK…PELMNRFLEP (78 aa)) folds into the SWIB/MDM2 domain.

Belongs to the SMARCD family. In terms of assembly, component of the RSC complex composed of at least arp9, arp42, rsc1, rsc4, rsc7, rsc9, rsc58, sfh1, snf21, ssr1, ssr2, ssr3 and ssr4. The complex interacts with histone and histone variant components of centromeric chromatin. Component of the SWI/SNF global transcription activator complex composed of at least arp9, arp42, snf5, snf22, snf30, sbf59, sol1, ssr1, ssr2, ssr3, ssr4 and tfg3.

It localises to the cytoplasm. Its subcellular location is the nucleus. In terms of biological role, component of the chromatin structure remodeling complex (RSC), which is involved in transcription regulation and nucleosome positioning. Controls particularly membrane and organelle development genes. Part of the SWI/SNF complex, an ATP-dependent chromatin remodeling complex, required for the positive and negative regulation of gene expression of a large number of genes. It changes chromatin structure by altering DNA-histone contacts within a nucleosome, leading eventually to a change in nucleosome position, thus facilitating or repressing binding of gene-specific transcription factors. This Schizosaccharomyces pombe (strain 972 / ATCC 24843) (Fission yeast) protein is SWI/SNF and RSC complexes subunit ssr3 (ssr3).